The chain runs to 97 residues: YcgL domain-containing protein PputW619_3899 (97 aa).

A YcgL domain is found at 3–87 (RICSIYKSPR…AEDEYIEHLP (85 aa)).

The polypeptide is YcgL domain-containing protein PputW619_3899 (Pseudomonas putida (strain W619)).